A 717-amino-acid polypeptide reads, in one-letter code: Pentatricopeptide repeat-containing protein At1g53600, mitochondrial (717 aa).

Residues 1–47 (MVMRPISNKGLIYRHNICLRCNSTLAVSNHEPITQKTRNFLETTTTS) constitute a mitochondrion transit peptide. 17 PPR repeats span residues 49–79 (AIFQ…MSNR), 80–110 (SIVS…MPVR), 111–142 (VTTS…IPEK), 143–173 (NAVS…TPVK), 176–206 (DSVA…MAVK), 207–241 (EVVS…NVIT), 242–272 (WTAM…GDVK), 274–308 (NSNT…PLEF), 309–339 (DLFL…MKNK), 340–374 (DSVS…DMVS), 375–401 (WTDM…MPEK), 402–436 (DNIT…EVCP), 437–471 (NSYT…NIVN), 472–502 (DLSV…ISEP), 503–537 (NIVS…GKEP), 538–568 (NGVT…MKSS), and 574–604 (GPDH…MPCK). Residues 609 to 684 (VWGSLLSASK…DPGSSWIILK (76 aa)) are type E motif. Residues 685–715 (GEVHNFLAGDESQLNLEEIGFTLKMIRKEME) form a type E(+) motif region.

It belongs to the PPR family. PCMP-E subfamily.

It localises to the mitochondrion. The polypeptide is Pentatricopeptide repeat-containing protein At1g53600, mitochondrial (PCMP-E63) (Arabidopsis thaliana (Mouse-ear cress)).